A 71-amino-acid polypeptide reads, in one-letter code: ATP synthase F(0) complex subunit e, mitochondrial (71 aa).

Residue Lys-34 is modified to N6-acetyllysine.

The protein belongs to the ATPase e subunit family. Component of the ATP synthase complex composed at least of ATP5F1A/subunit alpha, ATP5F1B/subunit beta, ATP5MC1/subunit c (homooctomer), MT-ATP6/subunit a, MT-ATP8/subunit 8, ATP5ME/subunit e, ATP5MF/subunit f, ATP5MG/subunit g, ATP5MK/subunit k, ATP5MJ/subunit j, ATP5F1C/subunit gamma, ATP5F1D/subunit delta, ATP5F1E/subunit epsilon, ATP5PF/subunit F6, ATP5PB/subunit b, ATP5PD/subunit d, ATP5PO/subunit OSCP. ATP synthase complex consists of a soluble F(1) head domain (subunits alpha(3) and beta(3)) - the catalytic core - and a membrane F(0) domain - the membrane proton channel (subunits c, a, 8, e, f, g, k and j). These two domains are linked by a central stalk (subunits gamma, delta, and epsilon) rotating inside the F1 region and a stationary peripheral stalk (subunits F6, b, d, and OSCP).

It is found in the mitochondrion. Its subcellular location is the mitochondrion inner membrane. Subunit e, of the mitochondrial membrane ATP synthase complex (F(1)F(0) ATP synthase or Complex V) that produces ATP from ADP in the presence of a proton gradient across the membrane which is generated by electron transport complexes of the respiratory chain. ATP synthase complex consist of a soluble F(1) head domain - the catalytic core - and a membrane F(1) domain - the membrane proton channel. These two domains are linked by a central stalk rotating inside the F(1) region and a stationary peripheral stalk. During catalysis, ATP synthesis in the catalytic domain of F(1) is coupled via a rotary mechanism of the central stalk subunits to proton translocation. In vivo, can only synthesize ATP although its ATP hydrolase activity can be activated artificially in vitro. Part of the complex F(0) domain. The sequence is that of ATP synthase F(0) complex subunit e, mitochondrial from Bos taurus (Bovine).